The following is a 235-amino-acid chain: MIFSPPLHHATLIKRYKRFLADVITPEGETFTLHCANTGAMTGCATPGDTVWYSTSDNPKRKYAHSWELTHTQQGDWICVNTLRANTLVREAIEQNLVNELSGYSKISSEVKYGSESSRIDLLLQAEDRANCYIEVKSVTLLQQQRGYFPDAVTLRGQKHLRELLSVVESGQRAVLFFAVLHSGIEQVAPAHHIDERYATLLAQVQQLGVEVVCYGAKLSPDGIYLCDKLPFFID.

It belongs to the SfsA family.

The polypeptide is Sugar fermentation stimulation protein homolog (Serratia proteamaculans (strain 568)).